Reading from the N-terminus, the 315-residue chain is HVA22-like protein h (315 aa).

A disordered region spans residues P148–R315. Residues A173–K190 show a composition bias toward polar residues. Residues P234–P248 are compositionally biased toward pro residues.

It belongs to the DP1 family.

In Arabidopsis thaliana (Mouse-ear cress), this protein is HVA22-like protein h (HVA22H).